The following is a 97-amino-acid chain: DNA-directed RNA polymerase subunit omega (97 aa).

Belongs to the RNA polymerase subunit omega family. As to quaternary structure, the RNAP catalytic core consists of 2 alpha, 1 beta, 1 beta' and 1 omega subunit. When a sigma factor is associated with the core the holoenzyme is formed, which can initiate transcription.

It catalyses the reaction RNA(n) + a ribonucleoside 5'-triphosphate = RNA(n+1) + diphosphate. Promotes RNA polymerase assembly. Latches the N- and C-terminal regions of the beta' subunit thereby facilitating its interaction with the beta and alpha subunits. In Corynebacterium glutamicum (strain ATCC 13032 / DSM 20300 / JCM 1318 / BCRC 11384 / CCUG 27702 / LMG 3730 / NBRC 12168 / NCIMB 10025 / NRRL B-2784 / 534), this protein is DNA-directed RNA polymerase subunit omega.